The sequence spans 214 residues: uncharacterized protein (214 aa).

Catalysis depends on Y129, which acts as the Proton acceptor.

The protein belongs to the NAD(P)-dependent epimerase/dehydratase family.

This is an uncharacterized protein from Bacillus subtilis (strain 168).